The chain runs to 8515 residues: MSNNTMVNMSIEMKYDNDDTTSPDQKLPGLEALEMVKGAASVVAEIEPSSSASSIMGSREHHERMLGPLEVCVHDLVQEQSRQHGQTIAVHSIEKDLTYAELERYADWMAKYLMVKRDIQAGHIIPFCLKKSVWTMVAMLAIMKTGAACAALDPSQPVSRIKRILDDTEAPLVIVHRDYLGLAETLDVPSIVLGPDLWEGTSSGDTDKPLPVVDATQPAYIAFTSGSTGEPKGIVVPHRSIATSMREHGPATRVDTETRALQFASYTFDMSFQEMFTTLTHGGCVCVPSEAERWNDLAGAMERLGVNWAKLTPTVVRLLHPEQVPSLRTLVVGGEPITQDIIQTWAHRVDLIVSYGPAEASIMAAVSDPLAPTALPRVIGRQVGGTLHVVDAGNHDRLVEGSGEGELLIEGPILATGYLKDQSRTDATFIIDPKWVSCDSENVTTAPRRFLKTGDLVHRDEDGVLYHLGRKDFRLKLNGRLIDLAAIETCLLGSAQIASAVVIATREDTFWQQSLVAVISAKPTPSSRPDPHDAGHIRIQTQHDLMLPLIRDLKDVAQSALPDYMVPTVWLVVDSVPRLPSGKIHRRRVVQWLENLDEFTVQEIRSMQNHTPHCEPETAMERRLRDIWAEVLNMPVSTVSTMASFTGLGGDSVAAMRLARRCAAQGLEIDVQMILQNLSITELAPRVKVAEHSTDTSADNERFSIGISLDQLCQSLPPRLRSSITLDDVVDTYRCSPMQEAILLSRSRFQGYYDVRWVAEVVSIDQDTPISLQRVRDAWVDVVRRHPALRTFFVQDASTGNRLLTQVILGSFPPLVSIDHSQATLDGIMGVNAAESSDPLHQEPHRLSLFSLPTGQVFLKLELNHALSDGVSTALIFRDLSLAYSKALPSSPAPSFGGFIRRLNLGEAEASSTALKYWTDRLTGMVPCLFPVLREAAWTGPSAVQHVEIPIHGSQGALRRFCTQHGTTIANVFQTAWALVLSIYTGTDDVSFCYLVSGRDASVDNVDEIVGPLISIMVHRLTLSRSLALLQVLRQVQSDFTVALGHQHCSLAQIAHSLNLRGQPMSNTVVNVQRRFSQGGPDGVADVYIRGIDCCNPTEFAIAVDVEDWETYMTARLSYWESCISQTQAEGIAETLAEVIRNIQTNPLQTVGEVALVGDAVLAKLSTWNAVLPEANEACLPELVERQVISQPSAVAIDTDAEQITYISLWNLSGLLAGRLIDSGVQPRDLVAVCVPQSSWAVIAMLAIQRAGGACVPLDPKAPAQRWWEIISRTGISTVVTSETKKHIMSSQLPGLQVVSADGTEIDQHHLQGSGRVLPVLSVDSTAYVLFTSGSTGSPKGIDVPHRAICTSLCAHCPVLGITNETRSLQFAAYTFDASIEETFGVLVHGGCVCIPSEDTKMNGLVDFINRKAISWAFFTPSLVRLIDPDLVPSLQTIVLGGEAVGNDIFNTWSHRVDLINGYGPAEASICCAAAHLSLRQTQSPSTIGRAVGCRIWVVDPQNINRLLPPDCVGELLIEGHIVANGYWGDEERTASSFLPPPEFLQSLSLEYPADNFRRCFYRTGDLVRQRHDGSLIYVGRSDWQTKVNGQRVEIGEVEAQLSFHMAKNHSNHLSMVCVPKSGPWMKRLVAILSLDPEECTVGNRSNVVFCLDKPETAAMIRTISKGIESSLPPFMIPTVWIPVKQLPTLASGKINRRCVQEWVETSNEGIFLSVSRINSEAFGTSSTETTRGLTPTETVIRAIWSRVLNIPLHSIGLDNTFLSLGGDSISAMQVVYQAHREGLTISVQDIFHCKTVAKLGRHADHSSKNTSSSNLLAPPVDEVEVPFALSPIQQWFFESVPHKPAILNHYNQSAHFRVMKEIDHSQLFKALQHVVQRHAMLRSRFILDSWSWQQKITTDIEGSFRLEVESIDAITAFRSCCERAQKMIDIIHGPLLVAILVKVAEPAQHFLVLIGHHLSMDVVSWSIIHRELEAFLAGGQVIAPLSSTSFQQWARLHYEPNIVPAEPREVLPFSVLEADLDYWGMRDTANEYRHGEYITTSVDEETTASIFKEANIAIGTEPVELIMAAVLYSFGRIFHDRSLPALYMEAHGREGDEFGLDLSGTVGWFTTICPLQLHRESLHTWARAVAQVKDRRRSIPAKGWAYFACRTVSPKGQASFNHHQQMEILFNFTGSTGDINDEHDRFLSPVRLMEDSRSDFDPKTPRVALFAIEASVENRQLRFSVSYHRSMRHVPRVKQWIHSLPSTLQEGVQMLSTIGRQPTLYDCPLAALNYSDLDSILARIQQSQADMVVEEIYPCSHIQEGILLSSMRNPGHYQVRWLVKVEARRGLPVSTQRLAKAWQSVVRKHSILRTIFVDDPSGTSSFLQVVVEDPRYPASIVEVQHRDSVASLDEDIDFTVGELPYRATIYQLHDGNVFFLLDISHAILDGTSMGILAHELVRGYDGSLTGDEAPHYRDYIRLLQTMPRNETLAHWKAYLQDIEPCKMISRNNCVEKVITPEVRKVAVQLPSTESLQQFCKTYEVTFANILQAVWAVVLMHYSGSETVCFGYLSSGRDLPIPHVDRAVGPYINILPCAVRLQQSSSRLDVVKAIQADLYQNLAHEHCSLWQIHKELGLKGTTLFNTLVNFQKTTAAVEDASISLTTVASRDPSEYDLAFNVTDEGSSMTAELAFWSSFMDEPDANDLSRAVSRVFNEFVRSPEAVLHDLSPIGPLNVEQIVRLMPSPISGEQQCLHWLIEQWVCRTPDAPAVCSTELEWSYAKLHQLTTSLSHHLCQLGVGRNDRAAICMEKSPWVIVAMLAVLQAGAAFVPLDPSHPRTRRESMISSLDAQVLLISLDADEDAHLTMSSCRQVRVGSTRGAGSDTGVSSNLPKNEPDDAAYILFTSGSTGQPKGVVVPHRAVCSSIKAWSDMLNIRSTTRSLQFAAYTFDAAIGEIFAVLANGGCVCVPSESERLNFLPETITQLDVNWSFLTPSVIRQIDPSSVPTLQTLALGGEPLSKEVIETWCDRVHLINVYGPTETCVFSHANPITDSKQEPSLIGPPILGRSWVVSPFNIDILVPRGCIGELVIESPAVAAGYFNNPEQTAKAFIAPPRWWKLAQDALSGSNKRTEDELPRFYLTGDMVRQNVDGSITYLGRRDTQTKINGQRVELGEIEYHILRLPAVLHAFVGVPKGGPYESRLVAVVSLRSEDGSGRGEAVLPEDFRLEVVEPQIAARYTSDLIVHLERNLPAYMVPAFLVVVRQLPLQPSGKINRRMILSWLSEPTMAGLQKTQHNFTRREEEPTTLGPVEKQMREIWSEVLNLPVTRIRLDQSFFDLGGDSITAMQVVSRCRRSGLQLTVQDLLRWKTITKVTPRTISLSQVTGERVYSLTSAGSVVDMRSIASKLEAIGLPGRAGVKGVYACSPMQEGILLAALKSPGKYEVVLMLEIRATGSQDRVDLELLESAWLQVVDRHDMLRTVFLQEKTATGVFSQVVYKHIDPPIEITTVDDLDTLRSASFSAGHFDCIPYRVTLCKLSGSSLAYVRLDISHAVVDGWSLSILSRDLQQAYDGQLPSQPVAQYCELIQYLESQPQETSMEFWRHLLTGMVPCHLPNMISNSGSHSTQEVKLHQTRLEVDRNQELRDFCAAHDITIANVFQLAWAVVLYRYTGMEDVCFGYLISGRDAPIDNLEDAVGPFINILVARATLRQGISVKEFLGEIRDTFLAMSAHQHTSLTQIQHELAVGNLGLFNTALNVQHRALTQQNPHSDIEICELSGRDPSEFGAILNVIDAGNTLEFALSYWSDLLSEETGREICSFLSCILSAVLDNSGCSVKTVSQTAADAARSFIDRKGDGDISSTPRGNPAPECYRPLKEPTNLIALTVQQVCAEVLDLSVSSLSLDETFLSLGGDSLLAMKVVSRCREHGVALTVQHMLQNQTIREVFEHARFSDSFSYRQLRHTPDPTGIPFPLSPIQKLHFHLMPTGQNYYNQSFFLRVTERLEASAIERAVRLLVLRHSVLRARFNQQIDGAWAQVISPDIEGSYHFSATSLISWDDLWPLVEGAQKRLNIRQGPLLSVDVLNLQGGDQHIYLVGHHLVVDLVSWRIILADLEIILRGGELSHDPPLSFQTWIRLATEYAQDNIDPATTLPFQLRPGNFAYWGMAGIPNLAKDVSSLSFTLPTDITSSLLGPANASLGTEPTDLMIAALAHTFSLVFHDHSGLTIFQESHGREPWTPEIDLSATCGWFTVLTPLSVETDKVEFRNTLKRVKDLRRRIPGKGWPYFASRFASRRRTGQKLDEKDEIEVLFNFVGLYQQFNRNDSLFVRPVADVSLPPDFSPDSIRLALIEINSLVDGQGRMVMHVTYNSRMKRQEGLTAWLERSQQVLEEEMPKLLTAAPERTPSDFQLLSLSYNELSALESHCHKQFGLDLNAVEDIYPCSPMQEGILLSQVRDPSLYRVEWVADVRCVGGEAVDLGQLKQAWGQVVRRHPILRTIFVERDHDAGAYLQLVLNQSLFPSSCNSASAYKVLLHLPYHITFQCLPETDTVRITLQANHAIIDGVTLAILARDLGSAYGGELPDVSGPPFSDFVKFLRTRTIDKDLQYWSEFLSDSQPTLFPSLGSQLGPTPGAEDDLFVEKHIHFADGAKMHEFCATFGVTVLNLFQVAWALVLRLYTGQDDVCFGYLASGRDSNVSGIDDIAGPMINMLVCRLQPTRDKTPRELLKQAHKHLTLALSHQHVPLAEVQNRLRTHGTPLFNTLVNLQKSNVGQGISHLTISTIGANDPNEFTIGLQIADNGQSIDVLFGHWLSRVSVDQADLLASLLSSTVNNIMARPRARLGTINFCNGVHAQKMAEWNEQARRPVVESTLHSIIQDQARQRPSTIAIASTEAMWTYEELERAADQTARYLLRQGVQPGTILPFCMAKSPRAIVVMLAILKVGCACAALDPAHPPDRLKLIVQQTGAKFVISEPVVMDSLILDGTANILSLTDCGGSINEPGLTPCQLPSVKPTDIAFIMFTSGSTGTPKGVLIQHDSICTSIQYNGEAEMVTSSTRGLQFSSYAFDTSVDEIFTVLSRGGCVCVPTEAERMNHLAAFISRFDVNWLSITPTVARLIAPGEVPSVRTIVLGGEEIDPGVVNHWKDHAELVASYGPAEASIACAASPVTSVVGDALLGRPVASSLWVVDPSDHDALMPIGTAGELVIGGPLVARGYLNDPDRTSLAFVCPKWSTELNLPFNRFYRTGDMARWNVDGTLSYVGRLDTQVKLNGQRVELGEVERHLLAQPCLQCSTCAVPQSGLLANRLVGVIGLQTPQISAADGFHCLEISQARTLVPYASDAEESLRAKLPPYMVPTVWIGVQSLPLNASGKLDRRKVNKWLESFQDEDTLNIFQLVGSEQEAEDEPPLTPIQQTIRNIWADVLGRTSESIGLQRSFFALGGDSVAAIRVVAQCRQANLQLTVQDVFQARTIQSLAACATAIIEKPVETVSSLLEPSQCENPESELAKLDSEVLSGLGGPENIEEIYPCSPMQEGILFSRSSIGGSYDTRLVVEVLPRDGAEVDLDRLKNAWAAVVQRHPILRTVFADRPSDDSAFIQVTFRKYRPVIMGCETSEQSLDDMIAMPVQPFDDRRNPPHRFTICTSSQQRVFILLEISHVLTDAVSIDIIWRDLQLAYEGALTTSKAPRYSRFVSYLQGTSQKDHMAYWLKFLKDAEPCLFPHLGTGNQKGATRAVSVTISRAMTDHIRQFCASLQITVANLIQVMWSMVLRSYTGMDDVSFGYITSGRDLPLDGIDDLVGPLISMMISRVRYTPSMKVADVIKQVGQDTVASMAHQHCSLAAIHREVGLKSRSLFNTVLTVVRPHSTQSIDSSLQLTQIASSAGTSEFDVVLEVSDSGVELDTTLAYSESALRSEDATNLSQAIMCALNWIIAHPESLVDHLSLCSPDLISQMTAMNNASPEWELRQCLHELISLRAHRQPDSPALWTGQGTMTYSELDSKSTMLARQLISLGVRPGSLVPICLSKSTVAVLAMLAIMKAGGAFVPLDPLHPTQRLADLVQRTGAKLILSSANTRNSAEFAGPRVVEVEQLLSRVTSVNEIDGVCPAPDPEGIAYVLFTSGSTGVPKGVVVPHRAVCCSIRAHSEAMNINTTSRSLQFASYTFDACICEIFSVLVAGGTVCIPSEEERVHDLAGFITRSQANWAFFTPTVIRTLGLSPSQVPSLRTLVLGGEVVTVHDARTWAGHVSLFNGYGPTETCVFCATTPIHPDGVTYGRIGRPIGCAAWVVRPDNHDILLPPGCPGELLIEGPIVSQGYLNDPVRTQEAFITHPAWAQNRKLSQNQSSARRFYKTGDLVRQSPDGTLVYMARLDSQVKINGQRLDLGEIRHQIHSVVSEDVQVFIDLLPPTCLPNEKALLVAFLASTRFEPEQTSGFSPPIKALTSQLEQDLPRLLPRYMIPSVYLPLSAIPLTSGGKVDRQALRRRVSRMSMKELLVYTGEEQGTKLPISTAEEQQMQMLWAEVLRIPPETIGASDHFFRLGADSIDGMKLVALAQRHGILITLADIFRSPRLSDLATLLESPAHPDDSKHDLKSIIPAFSLLNVHSRNTVLKEIKADYALDVSQIEDIYPCTPLQESLMAASIQSHGAYVHHLVEKLPPSGEVPAIMSAWQSVIKMTPILRTRIVQTVSAGLLQVVLKESVQWLHRRQAIQEYLDEDARHSMTLGDPLLRLACLHDPGTPHTGHIVITIHHSIYDGWSLPHIRKLVYATQNGHPCSTSLPFNRFIHYLERKSDSRASDSFWQSFLYRSQPLAFPPLPSTGYQPVGTDSVQLSVHWPSTFPPSAFTLSTFVRVAWALVLGSYSGTDDVIFGLSLSGRDTPIPGILDILGPTICTVPFRVKFSGESIGALLERAHADSAAMLPYQHIGLHHIRQLGPDCQLACDFQTLLVIQPARDPSDPEPHSELTFTSSGGLTYAFALICQPHPSGIELHGDFDSNCVSRPVAERLLSQMKSVMGTLIFGDRRKLAAEVDVIDISQKATLATWQREPLQPGEGRVEDLIISRAQQAPDDLAIHAWDGELTYNELVEESATLAENLKRRGIGPGMLVPLCFVKSIYYVVTLLAVTRTGAAFVPIDPDAPIERMQKILKLTNACCILTSASLAEQTRAKAPARVAVFAIPLDRSARMSTDSDLMPGQSIVSHEAVYVLFTSGSTGIPKGVVVTHSSMKASLKAHGRRLGLSESSRVLQFSNHTFDVSLLEILTTLAYGGCVCIPSDGDRVNRLSEYMRDAKVNFAILTPSVARILSPVSVPDLRTLALAGEAWGQEIVNIWRDSVRLFNAYGPTEATILSAIGEVDAQCFRPNNIGSGSGALCWVTSPTDPTRLMAIGAAGELLLEGPILAQGYLGEEEKTRAAFIDPPMWRRELSSHGAPPCRSSLYRTGDLARYEEDGSITYLGRMDGQVKIRGQRTELSEIEHHILASDAVRNAVVLLRKNKLVCVLSLQSTSLTPAPSRPGDIRPVSDDDRDAALRICLSIRAGLARKVPEYMVPDLWVPVIDLPLSSSGKLARKGVDDWLASVDTKHLINLSLQKIPLSTTSPSPNIASSSVERAIRQVIAGALQLPVQQVSVDAPFTALGGDSITAILVASKLRNMGILLTMRDILEFPSIQHLASREDLTAPSPANLPLDVEQVNVPFELTPIQRFFFCFFPDGANHFNQSILVRVARRFTYDQWITSLRALVQRHGMLRARFSNVDNNLQQRITDESEGACCVKWHTLEAMDPSYISTALDRCERRIDIFQGPICAVEIFDFPHEQIFFIAAHHLVMDFVSQQILLKDLDSLLAGEELSTPRPLSFQAWSLKQIEYGSNLALSPQAVLPHHENVPLANLNYWGIAAMDSCYADSAVRVLEFDSTVTSSLVGDANRAFNSEPIELFIASLLHSFANTFTDRSAPAIFKEGHGRQTREPRLDPSSTVGWFTTITPIALAVSPQLSTFEDTLRRVKDICRAIPANGFDYFTSRFLNASGSSAFQSHGPMMEIVLNYAGVLNNVQQGGTLFCPIATEEQRQMRYHDINPQLRRFAVFDIYAQVAGGKLSFTFAYSPSLNYQDRISAWIESLRRLLEAISVDLPAKQPQKTLADYPRARLDYTALERLHKDIIPSLYPAKLDDVWECSPTQTVMLRARSYQPLFFSPHFIWKIAGTKASEGNRERLTKAWKRIVARHSVLRSVFTSQLTATYHQIVLANPPFFITWADMAGKESPSEALRRLPPLPSDELHLAFRLTASEDDEGDLFCRLDINHALIDHVSINVILSDVIAVYGGQPMDSDSAFSTFRDYVEYSHLRLVDGEPYWQDRLHDACPCVLTQRPYRQIPGVLFSKSVSVNASALKALCLSSGFTLASLFQACWAVLLQRYVGSDDVLFGYIASNRGLPIRGIDRMVGPLISILPRRVRLSPSASSVSEQVRAIAKHIHEQLHDDLEHHMSAGNTMAEVIQRGRCIEELLFPFDTAINFRSQPSAAVNSVSSDPTSPLQFADGQDPMPVSHQP.

Adenylation regions lie at residues 59 to 736 and 1163 to 1705; these read REHH…YRCS and AKLS…EWVE. Residues 587–1159 are condensation 1; it reads RRVVQWLENL…TVGEVALVGD (573 aa). In terms of domain architecture, Carrier 1 spans 615-691; that stretch reads EPETAMERRL…ELAPRVKVAE (77 aa). An O-(pantetheine 4'-phosphoryl)serine modification is found at Ser652. Positions 1732–1808 constitute a Carrier 2 domain; that stretch reads RGLTPTETVI…KLGRHADHSS (77 aa). At Ser1769 the chain carries O-(pantetheine 4'-phosphoryl)serine. Residues 1830-2273 form an epimerase 1 region; that stretch reads LSPIQQWFFE…TLYDCPLAAL (444 aa). The interval 2301 to 2709 is condensation 2; the sequence is SHIQEGILLS…RSPEAVLHDL (409 aa). Positions 2733-3266 are adenylation 3; sequence QCLHWLIEQW…RMILSWLSEP (534 aa). Residues 3286-3362 enclose the Carrier 3 domain; the sequence is TTLGPVEKQM…KVTPRTISLS (77 aa). O-(pantetheine 4'-phosphoryl)serine is present on Ser3323. Residues 3406-3819 are condensation 3; it reads SPMQEGILLA…DNSGCSVKTV (414 aa). Residues 3857-3933 form the Carrier 4 domain; the sequence is EPTNLIALTV…EVFEHARFSD (77 aa). Ser3894 bears the O-(pantetheine 4'-phosphoryl)serine mark. The interval 3953 to 4392 is epimerase 2; it reads LSPIQKLHFH…TPSDFQLLSL (440 aa). The interval 4420–4823 is condensation 4; it reads PCSPMQEGIL…ARPRARLGTI (404 aa). Residues 4837–5363 form an adenylation 4 region; the sequence is WNEQARRPVV…RKVNKWLESF (527 aa). A Carrier 5 domain is found at 5385–5461; it reads PPLTPIQQTI…SLAACATAII (77 aa). Ser5422 carries the post-translational modification O-(pantetheine 4'-phosphoryl)serine. Residues 5508-5923 are condensation 5; the sequence is SPMQEGILFS…SLVDHLSLCS (416 aa). Residues 5941 to 6459 are adenylation 5; it reads ELRQCLHELI…GKVDRQALRR (519 aa). Residues 6482–6558 enclose the Carrier 6 domain; that stretch reads PISTAEEQQM…DLATLLESPA (77 aa). Ser6519 is subject to O-(pantetheine 4'-phosphoryl)serine. The tract at residues 6606–6992 is condensation 6; it reads CTPLQESLMA…SQMKSVMGTL (387 aa). An adenylation 6 region spans residues 7030-7544; the sequence is VEDLIISRAQ…SSGKLARKGV (515 aa). Residues 7575–7651 form the Carrier 7 domain; the sequence is IASSSVERAI…HLASREDLTA (77 aa). Ser7612 is modified (O-(pantetheine 4'-phosphoryl)serine). Residues 7670–8119 are epimerase 3; it reads LTPIQRFFFC…DYPRARLDYT (450 aa). The segment at 8164–8504 is condensation 7; it reads HFIWKIAGTK…DPTSPLQFAD (341 aa). Over residues 8488 to 8500 the composition is skewed to polar residues; the sequence is AVNSVSSDPTSPL. The interval 8488 to 8515 is disordered; the sequence is AVNSVSSDPTSPLQFADGQDPMPVSHQP.

Belongs to the NRP synthetase family.

Functionally, nonribosomal peptide synthesis (NRPS) is a key mechanism responsible for the biosynthesis of bioactive metabolites which are potentially contributing to organismal virulence. However, contarary to other nonribosomal peptide synthases, NRPS8 does not encode a secreted peptide, but has more a structural role since it is involved in germ tube formation. This is Nonribosomal peptide synthetase 8 (NRPS8) from Aspergillus fumigatus (strain ATCC MYA-4609 / CBS 101355 / FGSC A1100 / Af293) (Neosartorya fumigata).